The chain runs to 251 residues: Probable transcriptional regulatory protein MLBr00475 (251 aa).

It belongs to the TACO1 family.

The protein resides in the cytoplasm. This chain is Probable transcriptional regulatory protein MLBr00475, found in Mycobacterium leprae (strain Br4923).